Here is a 448-residue protein sequence, read N- to C-terminus: N-succinylarginine dihydrolase (448 aa).

Residues 19-28, asparagine 110, and 137-138 contribute to the substrate site; these read AGLSSGNIAS and HR. Residue glutamate 174 is part of the active site. Arginine 216 lines the substrate pocket. Residue histidine 252 is part of the active site. Aspartate 254 and asparagine 366 together coordinate substrate. Residue cysteine 372 is the Nucleophile of the active site.

The protein belongs to the succinylarginine dihydrolase family. In terms of assembly, homodimer.

It catalyses the reaction N(2)-succinyl-L-arginine + 2 H2O + 2 H(+) = N(2)-succinyl-L-ornithine + 2 NH4(+) + CO2. The protein operates within amino-acid degradation; L-arginine degradation via AST pathway; L-glutamate and succinate from L-arginine: step 2/5. Catalyzes the hydrolysis of N(2)-succinylarginine into N(2)-succinylornithine, ammonia and CO(2). The sequence is that of N-succinylarginine dihydrolase from Legionella pneumophila (strain Corby).